A 427-amino-acid chain; its full sequence is MTEAMKITLSTQPADARWGEKATYSINNDGITLHLNGADDLGLIQRAARKIDGLGIKHVQLSGEGWDADRCWAFWQGYKAPKGTRKVEWPDLDDAQRQELDNRLMIIDWVRDTINAPAEELGPSQLAQRAVDLISNVAGDRVTYRITKGEDLREQGYMGLHTVGRGSERSPVLLALDYNPTGDKEAPVYACLVGKGITFDSGGYSIKQTAFMDSMKSDMGGAATVTGALAFAITRGLNKRVKLFLCCADNLISGNAFKLGDIITYRNGKKVEVMNTDAEGRLVLADGLIDASAQKPEMIIDAATLTGAAKTALGNDYHALFSFDDALAGRLLASASQENEPFWRLPLAEFHRSQLPSNFAELNNTGSAAYPAGASTAAGFLSHFVENYQQGWLHIDCSATYRKAPVEQWSAGATGLGVRTIANLLTA.

Residues Lys195 and Asp200 each contribute to the Mn(2+) site. Residue Lys207 is part of the active site. 3 residues coordinate Mn(2+): Asp218, Asp277, and Glu279. Arg281 is a catalytic residue.

It belongs to the peptidase M17 family. In terms of assembly, homohexamer. Mn(2+) serves as cofactor.

Its subcellular location is the cytoplasm. The catalysed reaction is Release of an N-terminal amino acid, Xaa, from a peptide or arylamide. Xaa is preferably Glu or Asp but may be other amino acids, including Leu, Met, His, Cys and Gln.. Probably plays an important role in intracellular peptide degradation. In Escherichia coli (strain SE11), this protein is Peptidase B.